The following is a 331-amino-acid chain: N-arachidonyl glycine receptor (331 aa).

Residues 1-26 are Extracellular-facing; it reads MAIPSNRDQLALSNGSHPEEYKIAAL. Asn-14 carries an N-linked (GlcNAc...) asparagine glycan. A helical membrane pass occupies residues 27 to 47; sequence VFYSCIFLIGLLVNVTALWVF. At 48–56 the chain is on the cytoplasmic side; it reads SCTTKKRTT. Residues 57-77 form a helical membrane-spanning segment; it reads VTIYMMNVALLDLVFILSLPF. Residues 78–95 are Extracellular-facing; the sequence is RMFYYAKGEWPFGDYFCH. Cysteines 94 and 172 form a disulfide. A helical transmembrane segment spans residues 96-116; that stretch reads ILGALVVFYPSLALWLLALIS. Topologically, residues 117-138 are cytoplasmic; it reads ADRYMAIVQPKYAKELKNTGKA. A helical transmembrane segment spans residues 139 to 159; that stretch reads VLACVGVWIMTLTTTVPLLLL. The Extracellular segment spans residues 160-191; sequence DEDPDKASSPATCLKISDIIHLKAVNVLNFTR. A glycan (N-linked (GlcNAc...) asparagine) is linked at Asn-188. The helical transmembrane segment at 192–212 threads the bilayer; that stretch reads LIFFFLIPLFIMIGCYVVIIH. The Cytoplasmic segment spans residues 213 to 236; sequence SLLRGQTSKLKPKVKEKSIRIIVT. The chain crosses the membrane as a helical span at residues 237 to 257; sequence LLLQVLACFVPFHICFALLML. Residues 258–268 lie on the Extracellular side of the membrane; sequence QGEENSYSPWG. Residues 269–289 traverse the membrane as a helical segment; sequence AFTTFLMNLSTCLDVVLYYIV. The Cytoplasmic segment spans residues 290–331; that stretch reads SKQFQARVISVMLYRNYLRSVRRKSVRSGSLRSLSNMNSEML. The residue at position 322 (Ser-322) is a Phosphoserine.

The protein belongs to the G-protein coupled receptor 1 family. Expressed in testis, spleen and brain (at protein level).

It localises to the cell membrane. The protein localises to the cytoplasmic vesicle membrane. Functionally, g protein-coupled receptor (GPCR) that plays a role in diverse physiological processes particularly within the immune and nervous systems. Becomes active when triggered by various endogenous ligands including endocannabinoid N-arachidonyl glycine (NAGly), delta-9-tetrahydrocannabinol or resolvin D2/RvD2 derived from the omega-3 fatty acid docosahexaenoic acid (DHA). Upon RvD2 binding, facilitates the resolution of inflammation, aiding in tissue repair and homeostasis. Mechanistically, RvD2 ligation initiates Galphas protein coupling, activation of cAMP-PKA signaling pathway and phosphorylation of STAT3, leading to RvD2-stimulated macrophage phagocytosis. Mediates NAGly-induced process of reorganization of actin filaments and induction of acrosomal exocytosis. Activation by N-arachidonoyl glycine (NAGly) can also induce apoptosis in macrophages. Plays a role in homeostasis of CD8+ subsets of intraepithelial lymphocytes (IELs) (CD8alphaalpha and CD8alphabeta IELs) in small intestine by supporting preferential migration of CD8alphaalpha T-cells to intraepithelial compartment over lamina propria compartment, and by mediating their reconstitution into small intestine after bone marrow transplant. Participates also in hypotensive responses, mediating reduction in intraocular and blood pressure. This chain is N-arachidonyl glycine receptor, found in Rattus norvegicus (Rat).